A 477-amino-acid polypeptide reads, in one-letter code: Aspartyl/glutamyl-tRNA(Asn/Gln) amidotransferase subunit B (477 aa).

It belongs to the GatB/GatE family. GatB subfamily. In terms of assembly, heterotrimer of A, B and C subunits.

It carries out the reaction L-glutamyl-tRNA(Gln) + L-glutamine + ATP + H2O = L-glutaminyl-tRNA(Gln) + L-glutamate + ADP + phosphate + H(+). The enzyme catalyses L-aspartyl-tRNA(Asn) + L-glutamine + ATP + H2O = L-asparaginyl-tRNA(Asn) + L-glutamate + ADP + phosphate + 2 H(+). Its function is as follows. Allows the formation of correctly charged Asn-tRNA(Asn) or Gln-tRNA(Gln) through the transamidation of misacylated Asp-tRNA(Asn) or Glu-tRNA(Gln) in organisms which lack either or both of asparaginyl-tRNA or glutaminyl-tRNA synthetases. The reaction takes place in the presence of glutamine and ATP through an activated phospho-Asp-tRNA(Asn) or phospho-Glu-tRNA(Gln). The protein is Aspartyl/glutamyl-tRNA(Asn/Gln) amidotransferase subunit B of Nitrosococcus oceani (strain ATCC 19707 / BCRC 17464 / JCM 30415 / NCIMB 11848 / C-107).